Reading from the N-terminus, the 264-residue chain is MRQYLQLLEDILENGVEKEDRTGVGTLSVFGRQLRFNLQDGFPLVTTKKLHIRSIIYELLWFLKGDTNVRYLQENGVTIWDEWADENGDLGPIYGAQWRSWKGADGKTIDQIAWVVEEIKRNPNSRRLLVSAWNVAELDEMKLPPCHYAFQFYVANGRLSCMWQQRSVDTFLGLPFNIASYALLTHMIAQQCDLDVGELIFTGGDVHLYKNHLEQAKLQLTREPRPLPKLVIKRKPPSIFDYEYDDFEIVGYNPHPTIKAPVAV.

DUMP is bound at residue R21. Residue H51 participates in (6R)-5,10-methylene-5,6,7,8-tetrahydrofolate binding. Residue 126–127 coordinates dUMP; the sequence is RR. The active-site Nucleophile is C146. DUMP-binding positions include 166-169, N177, and 207-209; these read RSVD and HLY. A (6R)-5,10-methylene-5,6,7,8-tetrahydrofolate-binding site is contributed by D169. A263 lines the (6R)-5,10-methylene-5,6,7,8-tetrahydrofolate pocket.

The protein belongs to the thymidylate synthase family. Bacterial-type ThyA subfamily. Homodimer.

Its subcellular location is the cytoplasm. The enzyme catalyses dUMP + (6R)-5,10-methylene-5,6,7,8-tetrahydrofolate = 7,8-dihydrofolate + dTMP. The protein operates within pyrimidine metabolism; dTTP biosynthesis. Functionally, catalyzes the reductive methylation of 2'-deoxyuridine-5'-monophosphate (dUMP) to 2'-deoxythymidine-5'-monophosphate (dTMP) while utilizing 5,10-methylenetetrahydrofolate (mTHF) as the methyl donor and reductant in the reaction, yielding dihydrofolate (DHF) as a by-product. This enzymatic reaction provides an intracellular de novo source of dTMP, an essential precursor for DNA biosynthesis. This is Thymidylate synthase from Geobacillus kaustophilus (strain HTA426).